Reading from the N-terminus, the 120-residue chain is Large ribosomal subunit protein bL20 (120 aa).

Belongs to the bacterial ribosomal protein bL20 family.

In terms of biological role, binds directly to 23S ribosomal RNA and is necessary for the in vitro assembly process of the 50S ribosomal subunit. It is not involved in the protein synthesizing functions of that subunit. This chain is Large ribosomal subunit protein bL20, found in Methylacidiphilum infernorum (isolate V4) (Methylokorus infernorum (strain V4)).